The sequence spans 82 residues: Sec-independent protein translocase protein TatA (82 aa).

A helical transmembrane segment spans residues 1-21; sequence MGGISIWQLLIIAVIIVLLFG. The interval 46–82 is disordered; sequence DEPAKDAKKDADFVPQNLEKKEAETVEKQKQNDKEQA.

This sequence belongs to the TatA/E family. In terms of assembly, the Tat system comprises two distinct complexes: a TatABC complex, containing multiple copies of TatA, TatB and TatC subunits, and a separate TatA complex, containing only TatA subunits. Substrates initially bind to the TatABC complex, which probably triggers association of the separate TatA complex to form the active translocon.

It localises to the cell inner membrane. Functionally, part of the twin-arginine translocation (Tat) system that transports large folded proteins containing a characteristic twin-arginine motif in their signal peptide across membranes. TatA could form the protein-conducting channel of the Tat system. The polypeptide is Sec-independent protein translocase protein TatA (Aliivibrio fischeri (strain MJ11) (Vibrio fischeri)).